Consider the following 119-residue polypeptide: Protein yippee-like 1 (119 aa).

The Yippee domain maps to 19 to 116 (RTYSCIHCRA…IELAHMIKDN (98 aa)). 4 residues coordinate Zn(2+): Cys-23, Cys-26, Cys-79, and Cys-82. The short motif at 99 to 104 (KYKEGK) is the Nuclear localization signal element.

This sequence belongs to the yippee family.

The protein localises to the nucleus. Functionally, may play a role in epithelioid conversion of fibroblasts. The sequence is that of Protein yippee-like 1 (YPEL1) from Chlorocebus aethiops (Green monkey).